The following is a 212-amino-acid chain: Actin-depolymerizing factor 1, isoforms a/b (212 aa).

The region spanning 3-159 is the ADF-H domain; sequence SGVMVDPDVQ…SHKELLNNCP (157 aa).

This sequence belongs to the actin-binding proteins ADF family. In terms of assembly, interacts with F-actin.

Its function is as follows. Depolymerizes growing actin filaments in muscle cells; required for the assembly of actin filaments into the functional contractile myofilament lattice of muscle. Competes with unc-87 for actin binding and inhibits the actin-bundling activity of unc-87. This Caenorhabditis elegans protein is Actin-depolymerizing factor 1, isoforms a/b.